The following is a 269-amino-acid chain: Regulatory protein RecX (269 aa).

It belongs to the RecX family.

The protein localises to the cytoplasm. In terms of biological role, modulates RecA activity. The sequence is that of Regulatory protein RecX from Geobacillus thermodenitrificans (strain NG80-2).